Consider the following 165-residue polypeptide: MALNLQGKQAIVAEVKEVAKGALSAVVADSRGVTVDKMTELRRAGREAGVHMQVVRNTLLRRIVEGTPFECLKDTFVGPTLIAFSAEHPGAAARLFKAFAKDNAKFEVKAAAFEGELIPAAQIDRLATLPTYEEAIARLMGTMKEAAAGKLVRTLAALRDQKEAA.

Belongs to the universal ribosomal protein uL10 family. In terms of assembly, part of the ribosomal stalk of the 50S ribosomal subunit. The N-terminus interacts with L11 and the large rRNA to form the base of the stalk. The C-terminus forms an elongated spine to which L12 dimers bind in a sequential fashion forming a multimeric L10(L12)X complex.

In terms of biological role, forms part of the ribosomal stalk, playing a central role in the interaction of the ribosome with GTP-bound translation factors. This chain is Large ribosomal subunit protein uL10, found in Yersinia pseudotuberculosis serotype IB (strain PB1/+).